Consider the following 299-residue polypeptide: NAD kinase (299 aa).

The Proton acceptor role is filled by Asp78. NAD(+) is bound by residues 78 to 79, 151 to 152, Lys162, Arg179, Asp181, 192 to 197, and Gln252; these read DG, ND, and TAYALS.

The protein belongs to the NAD kinase family. A divalent metal cation serves as cofactor.

The protein localises to the cytoplasm. It carries out the reaction NAD(+) + ATP = ADP + NADP(+) + H(+). Functionally, involved in the regulation of the intracellular balance of NAD and NADP, and is a key enzyme in the biosynthesis of NADP. Catalyzes specifically the phosphorylation on 2'-hydroxyl of the adenosine moiety of NAD to yield NADP. The polypeptide is NAD kinase (Coxiella burnetii (strain CbuG_Q212) (Coxiella burnetii (strain Q212))).